We begin with the raw amino-acid sequence, 1486 residues long: Alsin homolog (1486 aa).

3 RCC1 repeats span residues 147–201 (QGVV…MLVA), 256–307 (HTQL…ARTL), and 308–363 (DGRL…LLNA). MORN repeat units follow at residues 744–765 (CGTWRKGVLHGNCYLEYPDGSV), 766–784 (YCGELQHGIIEGFGKMVIP), 789–804 (YVGNFKGGRFHGHGVY), 817–832 (YEGNFCEGLFHGHGVM), 839–853 (YVGEYQANARSGYGV), and 863–884 (YMGMFADNKRSGIGSCITNRGD). The VPS9 domain maps to 1333–1486 (SRKDEMYRQN…VTSRALQKIP (154 aa)).

In the embryo, expressed in a wide range of tissues including the epidermis and the ventral nerve cord.

Has guanine nucleotide exchange factor (GEF) activity towards Rab5. Promotes the exchange of GDP to GTP, converting inactive GDP-bound Rab5 into its active GTP-bound form. This chain is Alsin homolog, found in Drosophila melanogaster (Fruit fly).